The following is a 117-amino-acid chain: NADH-quinone oxidoreductase subunit A (117 aa).

The next 3 membrane-spanning stretches (helical) occupy residues 4-24, 64-84, and 86-106; these read WIGVALFIVVGIVFGAGGMLT, LMFVIFDVEVIYLYPWAVSFV, and LGLAGLIKMFLFIFILVLGLW.

Belongs to the complex I subunit 3 family. NDH-1 is composed of 14 different subunits. Subunits NuoA, H, J, K, L, M, N constitute the membrane sector of the complex.

The protein resides in the cell membrane. The enzyme catalyses a quinone + NADH + 5 H(+)(in) = a quinol + NAD(+) + 4 H(+)(out). NDH-1 shuttles electrons from NADH, via FMN and iron-sulfur (Fe-S) centers, to quinones in the respiratory chain. The immediate electron acceptor for the enzyme in this species is believed to be a menaquinone. Couples the redox reaction to proton translocation (for every two electrons transferred, four hydrogen ions are translocated across the cytoplasmic membrane), and thus conserves the redox energy in a proton gradient. The polypeptide is NADH-quinone oxidoreductase subunit A (Desulforamulus reducens (strain ATCC BAA-1160 / DSM 100696 / MI-1) (Desulfotomaculum reducens)).